Reading from the N-terminus, the 231-residue chain is Phosphatidylserine decarboxylase proenzyme (231 aa).

Ser-189 functions as the Schiff-base intermediate with substrate; via pyruvic acid in the catalytic mechanism. Position 189 is a pyruvic acid (Ser); by autocatalysis (Ser-189).

The protein belongs to the phosphatidylserine decarboxylase family. PSD-A subfamily. Heterodimer of a large membrane-associated beta subunit and a small pyruvoyl-containing alpha subunit. Requires pyruvate as cofactor. In terms of processing, is synthesized initially as an inactive proenzyme. Formation of the active enzyme involves a self-maturation process in which the active site pyruvoyl group is generated from an internal serine residue via an autocatalytic post-translational modification. Two non-identical subunits are generated from the proenzyme in this reaction, and the pyruvate is formed at the N-terminus of the alpha chain, which is derived from the carboxyl end of the proenzyme. The post-translation cleavage follows an unusual pathway, termed non-hydrolytic serinolysis, in which the side chain hydroxyl group of the serine supplies its oxygen atom to form the C-terminus of the beta chain, while the remainder of the serine residue undergoes an oxidative deamination to produce ammonia and the pyruvoyl prosthetic group on the alpha chain.

It is found in the cell membrane. The catalysed reaction is a 1,2-diacyl-sn-glycero-3-phospho-L-serine + H(+) = a 1,2-diacyl-sn-glycero-3-phosphoethanolamine + CO2. Its pathway is phospholipid metabolism; phosphatidylethanolamine biosynthesis; phosphatidylethanolamine from CDP-diacylglycerol: step 2/2. Its function is as follows. Catalyzes the formation of phosphatidylethanolamine (PtdEtn) from phosphatidylserine (PtdSer). The chain is Phosphatidylserine decarboxylase proenzyme from Chelativorans sp. (strain BNC1).